The following is a 255-amino-acid chain: Electron transfer flavoprotein subunit beta (255 aa).

Position 2 is an N-acetylalanine (alanine 2). Residues alanine 9, 39–42 (NPFC), cysteine 66, and 123–134 (GKQAIDDDCNQT) contribute to the AMP site. The segment at 183 to 205 (ADLRLNEPRYATLPNIMKAKKKK) is recognition loop. Position 200 is an N6,N6,N6-trimethyllysine; by ETFBKMT; alternate (lysine 200). At lysine 200 the chain carries N6-acetyllysine; alternate. N6-methyllysine; alternate is present on lysine 200. Lysine 203 is subject to N6,N6,N6-trimethyllysine; by ETFBKMT. N6-acetyllysine; alternate is present on lysine 210. Residue lysine 210 is modified to N6-succinyllysine; alternate. Phosphoserine occurs at positions 223 and 226. Lysine 238 carries the N6-acetyllysine modification. Lysine 248 is modified (N6-acetyllysine; alternate). Lysine 248 bears the N6-succinyllysine; alternate mark.

Belongs to the ETF beta-subunit/FixA family. As to quaternary structure, heterodimer composed of ETFA and ETFB. Identified in a complex that contains ETFA, ETFB and ETFRF1. Interacts with ACADM. Methylated. Trimethylation at Lys-200 and Lys-203 may negatively regulate the activity in electron transfer from acyl-CoA dehydrogenases.

Its subcellular location is the mitochondrion matrix. Heterodimeric electron transfer flavoprotein that accepts electrons from several mitochondrial dehydrogenases, including acyl-CoA dehydrogenases, glutaryl-CoA and sarcosine dehydrogenase. It transfers the electrons to the main mitochondrial respiratory chain via ETF-ubiquinone oxidoreductase. Required for normal mitochondrial fatty acid oxidation and normal amino acid metabolism. ETFB binds an AMP molecule that probably has a purely structural role. The polypeptide is Electron transfer flavoprotein subunit beta (Mus musculus (Mouse)).